Reading from the N-terminus, the 78-residue chain is MSDIEQRVKQAVAEQLGLKAEEIKNEASFMDDLGADSLDLVELVMSFENDFDITIPDEDSNEITTVQSAIDYVTKKLG.

The region spanning 2–77 (SDIEQRVKQA…SAIDYVTKKL (76 aa)) is the Carrier domain. Ser-37 carries the O-(pantetheine 4'-phosphoryl)serine modification.

This sequence belongs to the acyl carrier protein (ACP) family. 4'-phosphopantetheine is transferred from CoA to a specific serine of apo-ACP by AcpS. This modification is essential for activity because fatty acids are bound in thioester linkage to the sulfhydryl of the prosthetic group.

It localises to the cytoplasm. Its pathway is lipid metabolism; fatty acid biosynthesis. In terms of biological role, carrier of the growing fatty acid chain in fatty acid biosynthesis. The chain is Acyl carrier protein from Acinetobacter baumannii (strain AB307-0294).